A 302-amino-acid chain; its full sequence is MITILGPTACGKTRLAVSLAYRLETEIISADSRQIYRGMDIGTGKDLADYQVGGTTIPCHLIDIRPAGDKYNLFAYQHDFHQAYASILARGMDPILCGGTGMYIEAVLKGYHLPDVPPNPTLRDRLQGKSLTELTLILAAYGPLHNKTDVDSAQRAIRAIEIAEYIKNNPVESTEFPPIDSLIIGLDLDRDTRRKRITDRLHARMHEGMIEEVKGLLDSGIPAEDLIYYGLEYKFVTLYLTGQTDYESMFTGLETAIHQFAKRQMTWFRGMERRGFLIHWIDALLPADEQCEAVMKLYGANG.

6–13 is a binding site for ATP; that stretch reads GPTACGKT. Residue 8–13 participates in substrate binding; that stretch reads TACGKT. Interaction with substrate tRNA regions lie at residues 31-34 and 154-158; these read DSRQ and QRAIR.

This sequence belongs to the IPP transferase family. Monomer. Mg(2+) serves as cofactor.

It carries out the reaction adenosine(37) in tRNA + dimethylallyl diphosphate = N(6)-dimethylallyladenosine(37) in tRNA + diphosphate. Catalyzes the transfer of a dimethylallyl group onto the adenine at position 37 in tRNAs that read codons beginning with uridine, leading to the formation of N6-(dimethylallyl)adenosine (i(6)A). This is tRNA dimethylallyltransferase 2 from Porphyromonas gingivalis (strain ATCC BAA-308 / W83).